A 285-amino-acid polypeptide reads, in one-letter code: MSRNLSIRAKVFLKPLVLFQIIDAYDRRPKGDNQVMGTLLGRTKEDHIEITNCFTVPHKEHSENKRIDLDMAYASEVLELNMFAYPNERVLGWFCTGKSVSRSASLIHDYYVRECGERQPLHLLVDASLKNQRLSTRLYCAVEMGVPGGTKGLMFSLVPLEISSENSDLVAVRCIEKQSQQQASKQMERFVPELVQVVDATRNIQQRLDLLLRYINDVLARKKKPDNLVGRSLQAALTAVPLFDSEKFRLMFNTNVRDMLMAITLSTMIKTQLEISEKLSCMQDQ.

The 135-residue stretch at V11 to G145 folds into the MPN domain.

The protein belongs to the eIF-3 subunit F family. Component of the eukaryotic translation initiation factor 3 (eIF-3) complex. The eIF-3 complex interacts with pix.

It localises to the cytoplasm. Component of the eukaryotic translation initiation factor 3 (eIF-3) complex, which is involved in protein synthesis of a specialized repertoire of mRNAs and, together with other initiation factors, stimulates binding of mRNA and methionyl-tRNAi to the 40S ribosome. The eIF-3 complex specifically targets and initiates translation of a subset of mRNAs involved in cell proliferation. This Drosophila sechellia (Fruit fly) protein is Eukaryotic translation initiation factor 3 subunit F-2.